The following is a 302-amino-acid chain: Beta-1,2-mannobiose phosphorylase (302 aa).

It belongs to the glycosyl hydrolase 130 family. Monomer.

It catalyses the reaction beta-D-mannopyranosyl-(1-&gt;2)-D-mannopyranose + phosphate = alpha-D-mannose 1-phosphate + D-mannose. It functions in the pathway nucleotide-sugar biosynthesis; GDP-alpha-D-mannose biosynthesis. In terms of biological role, probably involved in a salvage pathway for GDP-D-mannose biosynthesis. Catalyzes the reversible phosphorolysis of 1,2-beta-oligomannan. In phosphorolytic reactions, prefers beta-1,2-mannobiose (beta-1,2-Man2) as substrate. Produces alpha-D-mannose 1-phosphate, which is the precursor of GDP-D-mannose. This chain is Beta-1,2-mannobiose phosphorylase, found in Thermoanaerobacter sp. (strain X514).